We begin with the raw amino-acid sequence, 122 residues long: Large ribosomal subunit protein uL29B (122 aa).

A coiled-coil region spans residues 10–69 (QLGIKQIEERAAEIKAELAALRQKKNSGDVGANDIKTAKKNLARALTVRREKILEELVEA).

Belongs to the universal ribosomal protein uL29 family. As to quaternary structure, component of the large ribosomal subunit.

It is found in the cytoplasm. In Encephalitozoon cuniculi (strain GB-M1) (Microsporidian parasite), this protein is Large ribosomal subunit protein uL29B (RPL35C).